We begin with the raw amino-acid sequence, 450 residues long: tRNA modification GTPase MnmE (450 aa).

3 residues coordinate (6S)-5-formyl-5,6,7,8-tetrahydrofolate: arginine 21, glutamate 80, and lysine 119. Residues 213–373 (GIKVVIIGKP…LEEEIIKSVK (161 aa)) form the TrmE-type G domain. K(+) is bound at residue asparagine 223. Residues 223–228 (NVGKST), 242–248 (TDIPGTT), and 267–270 (DTAG) each bind GTP. A Mg(2+)-binding site is contributed by serine 227. Residues threonine 242, isoleucine 244, and threonine 247 each coordinate K(+). Position 248 (threonine 248) interacts with Mg(2+). Lysine 450 is a binding site for (6S)-5-formyl-5,6,7,8-tetrahydrofolate.

The protein belongs to the TRAFAC class TrmE-Era-EngA-EngB-Septin-like GTPase superfamily. TrmE GTPase family. As to quaternary structure, homodimer. Heterotetramer of two MnmE and two MnmG subunits. It depends on K(+) as a cofactor.

The protein localises to the cytoplasm. Functionally, exhibits a very high intrinsic GTPase hydrolysis rate. Involved in the addition of a carboxymethylaminomethyl (cmnm) group at the wobble position (U34) of certain tRNAs, forming tRNA-cmnm(5)s(2)U34. The protein is tRNA modification GTPase MnmE of Pseudothermotoga lettingae (strain ATCC BAA-301 / DSM 14385 / NBRC 107922 / TMO) (Thermotoga lettingae).